We begin with the raw amino-acid sequence, 89 residues long: MAISKEKKNEIIAQYARHEGDTGSVEVQVAVLTWEINHLNEHIKQHKKDHATYRGLMKKIGRRRNLLAYLRKNDVNRYRELINSLGLRR.

The protein belongs to the universal ribosomal protein uS15 family. As to quaternary structure, part of the 30S ribosomal subunit. Forms a bridge to the 50S subunit in the 70S ribosome, contacting the 23S rRNA.

In terms of biological role, one of the primary rRNA binding proteins, it binds directly to 16S rRNA where it helps nucleate assembly of the platform of the 30S subunit by binding and bridging several RNA helices of the 16S rRNA. Forms an intersubunit bridge (bridge B4) with the 23S rRNA of the 50S subunit in the ribosome. This chain is Small ribosomal subunit protein uS15, found in Streptococcus pneumoniae (strain P1031).